Here is a 384-residue protein sequence, read N- to C-terminus: L-cysteine:1D-myo-inositol 2-amino-2-deoxy-alpha-D-glucopyranoside ligase (384 aa).

Cysteine 16 is a Zn(2+) binding site. L-cysteinyl-5'-AMP-binding positions include 16 to 19, threonine 31, and 54 to 56; these read CGIT and NVT. Positions 18-28 match the 'HIGH' region motif; the sequence is ITPYDATHLGH. The 'ERGGDP' region motif lies at 159–164; the sequence is QSGGDP. Tryptophan 199 contributes to the L-cysteinyl-5'-AMP binding site. Residue cysteine 203 participates in Zn(2+) binding. L-cysteinyl-5'-AMP is bound at residue 221-223; the sequence is GSD. Residue histidine 228 participates in Zn(2+) binding. L-cysteinyl-5'-AMP is bound at residue isoleucine 255. Positions 261–265 match the 'KMSKS' region motif; that stretch reads KMSKS.

This sequence belongs to the class-I aminoacyl-tRNA synthetase family. MshC subfamily. Monomer. Zn(2+) is required as a cofactor.

It catalyses the reaction 1D-myo-inositol 2-amino-2-deoxy-alpha-D-glucopyranoside + L-cysteine + ATP = 1D-myo-inositol 2-(L-cysteinylamino)-2-deoxy-alpha-D-glucopyranoside + AMP + diphosphate + H(+). In terms of biological role, catalyzes the ATP-dependent condensation of GlcN-Ins and L-cysteine to form L-Cys-GlcN-Ins. The protein is L-cysteine:1D-myo-inositol 2-amino-2-deoxy-alpha-D-glucopyranoside ligase of Mycobacterium leprae (strain Br4923).